Here is a 451-residue protein sequence, read N- to C-terminus: Tubulin alpha-1 chain (451 aa).

Position 11 (glutamine 11) interacts with GTP. Lysine 40 bears the N6-acetyllysine mark. Glutamate 71, glycine 144, threonine 145, threonine 179, asparagine 206, and asparagine 228 together coordinate GTP. Glutamate 71 provides a ligand contact to Mg(2+). Glutamate 254 is an active-site residue.

This sequence belongs to the tubulin family. In terms of assembly, dimer of alpha and beta chains. A typical microtubule is a hollow water-filled tube with an outer diameter of 25 nm and an inner diameter of 15 nM. Alpha-beta heterodimers associate head-to-tail to form protofilaments running lengthwise along the microtubule wall with the beta-tubulin subunit facing the microtubule plus end conferring a structural polarity. Microtubules usually have 13 protofilaments but different protofilament numbers can be found in some organisms and specialized cells. Mg(2+) is required as a cofactor. In terms of processing, undergoes a tyrosination/detyrosination cycle, the cyclic removal and re-addition of a C-terminal tyrosine residue by the enzymes tubulin tyrosine carboxypeptidase (TTCP) and tubulin tyrosine ligase (TTL), respectively. Acetylation of alpha chains at Lys-40 stabilizes microtubules and affects affinity and processivity of microtubule motors. This modification has a role in multiple cellular functions, ranging from cell motility, cell cycle progression or cell differentiation to intracellular trafficking and signaling.

It is found in the cytoplasm. Its subcellular location is the cytoskeleton. The catalysed reaction is GTP + H2O = GDP + phosphate + H(+). Tubulin is the major constituent of microtubules, a cylinder consisting of laterally associated linear protofilaments composed of alpha- and beta-tubulin heterodimers. Microtubules grow by the addition of GTP-tubulin dimers to the microtubule end, where a stabilizing cap forms. Below the cap, tubulin dimers are in GDP-bound state, owing to GTPase activity of alpha-tubulin. This Chlamydomonas reinhardtii (Chlamydomonas smithii) protein is Tubulin alpha-1 chain (TUBA1).